The sequence spans 185 residues: Elongation factor P 1 (185 aa).

This sequence belongs to the elongation factor P family.

It is found in the cytoplasm. The protein operates within protein biosynthesis; polypeptide chain elongation. Its function is as follows. Involved in peptide bond synthesis. Stimulates efficient translation and peptide-bond synthesis on native or reconstituted 70S ribosomes in vitro. Probably functions indirectly by altering the affinity of the ribosome for aminoacyl-tRNA, thus increasing their reactivity as acceptors for peptidyl transferase. This is Elongation factor P 1 (efp1) from Chlamydia muridarum (strain MoPn / Nigg).